A 299-amino-acid polypeptide reads, in one-letter code: Protoheme IX farnesyltransferase (299 aa).

9 helical membrane passes run 29-49, 51-71, 100-120, 123-143, 150-170, 177-197, 223-243, 244-264, and 275-295; these read VVTLMLLTVLVGMCLALPGAV, LQPLIAGMLGIAMMAGAAAAM, HAATFAALLALLGFACLYWLV, LTAWLTLASLLGYAVVYTAYL, NIVIGGLAGAMPPLLGWTAVT, GLLLVIIIFAWTPPHFWALAI, CIFLYTILLALACLLPVLVGM, SGALYLLGSTLLSIGFIYKAW, and AMDVFRFSIYHLMLLFILLLV.

The protein belongs to the UbiA prenyltransferase family. Protoheme IX farnesyltransferase subfamily.

The protein resides in the cell inner membrane. It catalyses the reaction heme b + (2E,6E)-farnesyl diphosphate + H2O = Fe(II)-heme o + diphosphate. It functions in the pathway porphyrin-containing compound metabolism; heme O biosynthesis; heme O from protoheme: step 1/1. In terms of biological role, converts heme B (protoheme IX) to heme O by substitution of the vinyl group on carbon 2 of heme B porphyrin ring with a hydroxyethyl farnesyl side group. This chain is Protoheme IX farnesyltransferase, found in Shewanella amazonensis (strain ATCC BAA-1098 / SB2B).